The chain runs to 403 residues: Phosphoglycerate kinase (403 aa).

Substrate is bound by residues 21-23 (DFN), Arg-36, 59-62 (HLGR), Arg-119, and Arg-159. Residues Lys-214, Gly-301, Glu-332, and 359 to 362 (GGDS) each bind ATP.

This sequence belongs to the phosphoglycerate kinase family. As to quaternary structure, monomer.

Its subcellular location is the cytoplasm. It catalyses the reaction (2R)-3-phosphoglycerate + ATP = (2R)-3-phospho-glyceroyl phosphate + ADP. It participates in carbohydrate degradation; glycolysis; pyruvate from D-glyceraldehyde 3-phosphate: step 2/5. The polypeptide is Phosphoglycerate kinase (Lactobacillus delbrueckii subsp. lactis).